Reading from the N-terminus, the 513-residue chain is ATP synthase subunit alpha (513 aa).

170–177 (GDRQTGKT) is an ATP binding site.

The protein belongs to the ATPase alpha/beta chains family. F-type ATPases have 2 components, CF(1) - the catalytic core - and CF(0) - the membrane proton channel. CF(1) has five subunits: alpha(3), beta(3), gamma(1), delta(1), epsilon(1). CF(0) has three main subunits: a(1), b(2) and c(9-12). The alpha and beta chains form an alternating ring which encloses part of the gamma chain. CF(1) is attached to CF(0) by a central stalk formed by the gamma and epsilon chains, while a peripheral stalk is formed by the delta and b chains.

The protein resides in the cell inner membrane. The catalysed reaction is ATP + H2O + 4 H(+)(in) = ADP + phosphate + 5 H(+)(out). Its function is as follows. Produces ATP from ADP in the presence of a proton gradient across the membrane. The alpha chain is a regulatory subunit. The polypeptide is ATP synthase subunit alpha (Teredinibacter turnerae (strain ATCC 39867 / T7901)).